Here is a 577-residue protein sequence, read N- to C-terminus: Proline--tRNA ligase (577 aa).

It belongs to the class-II aminoacyl-tRNA synthetase family. ProS type 1 subfamily. In terms of assembly, homodimer.

It localises to the cytoplasm. It catalyses the reaction tRNA(Pro) + L-proline + ATP = L-prolyl-tRNA(Pro) + AMP + diphosphate. In terms of biological role, catalyzes the attachment of proline to tRNA(Pro) in a two-step reaction: proline is first activated by ATP to form Pro-AMP and then transferred to the acceptor end of tRNA(Pro). As ProRS can inadvertently accommodate and process non-cognate amino acids such as alanine and cysteine, to avoid such errors it has two additional distinct editing activities against alanine. One activity is designated as 'pretransfer' editing and involves the tRNA(Pro)-independent hydrolysis of activated Ala-AMP. The other activity is designated 'posttransfer' editing and involves deacylation of mischarged Ala-tRNA(Pro). The misacylated Cys-tRNA(Pro) is not edited by ProRS. This is Proline--tRNA ligase from Herminiimonas arsenicoxydans.